Here is a 347-residue protein sequence, read N- to C-terminus: 4-hydroxy-3-methylbut-2-en-1-yl diphosphate synthase (flavodoxin) (347 aa).

Positions 259, 262, 294, and 301 each coordinate [4Fe-4S] cluster.

The protein belongs to the IspG family. [4Fe-4S] cluster is required as a cofactor.

The catalysed reaction is (2E)-4-hydroxy-3-methylbut-2-enyl diphosphate + oxidized [flavodoxin] + H2O + 2 H(+) = 2-C-methyl-D-erythritol 2,4-cyclic diphosphate + reduced [flavodoxin]. It functions in the pathway isoprenoid biosynthesis; isopentenyl diphosphate biosynthesis via DXP pathway; isopentenyl diphosphate from 1-deoxy-D-xylulose 5-phosphate: step 5/6. Functionally, converts 2C-methyl-D-erythritol 2,4-cyclodiphosphate (ME-2,4cPP) into 1-hydroxy-2-methyl-2-(E)-butenyl 4-diphosphate. This Caldicellulosiruptor saccharolyticus (strain ATCC 43494 / DSM 8903 / Tp8T 6331) protein is 4-hydroxy-3-methylbut-2-en-1-yl diphosphate synthase (flavodoxin).